The following is a 294-amino-acid chain: tRNA pseudouridine synthase B (294 aa).

Aspartate 38 serves as the catalytic Nucleophile.

This sequence belongs to the pseudouridine synthase TruB family. Type 1 subfamily.

The catalysed reaction is uridine(55) in tRNA = pseudouridine(55) in tRNA. In terms of biological role, responsible for synthesis of pseudouridine from uracil-55 in the psi GC loop of transfer RNAs. The protein is tRNA pseudouridine synthase B of Clostridium perfringens (strain SM101 / Type A).